Reading from the N-terminus, the 966-residue chain is Probable LIM domain-containing serine/threonine-protein kinase DDB_G0286997 (966 aa).

LIM zinc-binding domains lie at 3–62 and 63–120; these read SRCG…LNAP and KCFK…KPPP. 2 disordered regions span residues 208–291 and 331–588; these read YSLS…PTED and PLNQ…EQQV. Over residues 211 to 231 the composition is skewed to low complexity; that stretch reads SSPSSSSSSSSSSSSSSSSPP. Polar residues predominate over residues 232 to 269; that stretch reads NTFNKSSDFLRNPLNNNVKSSSSSIGGNFVNKSQQQQQ. Composition is skewed to low complexity over residues 270–284 and 331–350; these read PIDS…ISPS and PLNQ…SPNL. Positions 374–389 are enriched in polar residues; the sequence is TTTFSNPLLKTKNQSF. Pro residues predominate over residues 419 to 430; the sequence is PLPPPPITPIPS. Over residues 431-449 the composition is skewed to low complexity; the sequence is PSSSSIIINNQQQQQQESQ. Residues 490–511 are compositionally biased toward pro residues; sequence KPIVLPPPPLDMEQLPLPPPPL. Residues 513–526 show a composition bias toward polar residues; it reads SSQINQSLKSTQHN. Over residues 543–560 the composition is skewed to low complexity; sequence IQKQSIPTRKPQLPQSSN. Pro residues predominate over residues 561-570; it reads PSPPSPPSPQ. Positions 702 to 959 constitute a Protein kinase domain; it reads VIFGDVIAAG…DTLKKISESL (258 aa). Residues 708–716 and lysine 729 each bind ATP; that span reads IAAGASGKV. Catalysis depends on aspartate 825, which acts as the Proton acceptor.

Belongs to the protein kinase superfamily. TKL Ser/Thr protein kinase family.

It carries out the reaction L-seryl-[protein] + ATP = O-phospho-L-seryl-[protein] + ADP + H(+). The enzyme catalyses L-threonyl-[protein] + ATP = O-phospho-L-threonyl-[protein] + ADP + H(+). The sequence is that of Probable LIM domain-containing serine/threonine-protein kinase DDB_G0286997 from Dictyostelium discoideum (Social amoeba).